A 569-amino-acid polypeptide reads, in one-letter code: Mitogen-activated protein kinase 7 (569 aa).

In terms of domain architecture, Protein kinase spans 13-304 (YKIQEIVGKG…AEEALADPYF (292 aa)). Residues 19 to 27 (VGKGSYGVV) and Lys42 contribute to the ATP site. The Proton acceptor role is filled by Asp139. A Phosphothreonine modification is found at Thr175. The short motif at 175-177 (TDY) is the TXY element. Residue Tyr177 is modified to Phosphotyrosine. The interval 401-420 (TTVHSTSIPPNEGLDATSQV) is disordered.

The protein belongs to the protein kinase superfamily. CMGC Ser/Thr protein kinase family. MAP kinase subfamily. Post-translationally, dually phosphorylated on Thr-175 and Tyr-177, which activates the enzyme.

It carries out the reaction L-seryl-[protein] + ATP = O-phospho-L-seryl-[protein] + ADP + H(+). The catalysed reaction is L-threonyl-[protein] + ATP = O-phospho-L-threonyl-[protein] + ADP + H(+). With respect to regulation, activated by threonine and tyrosine phosphorylation. The chain is Mitogen-activated protein kinase 7 (MPK7) from Oryza sativa subsp. japonica (Rice).